A 501-amino-acid chain; its full sequence is Sensor histidine kinase PdtaS (501 aa).

Residues Leu4–Ala150 form a GAF region. The PAS-like stretch occupies residues Asp179 to Leu291. One can recognise a Histidine kinase domain in the interval Glu300–Arg495. At His303 the chain carries Phosphohistidine; by autocatalysis.

In terms of processing, autophosphorylated.

It localises to the cytoplasm. The catalysed reaction is ATP + protein L-histidine = ADP + protein N-phospho-L-histidine.. Its function is as follows. Member of the two-component regulatory system PdtaR/PdtaS. This two-component system plays an essential role in mycobacterial adaptation to poor nutrient conditions. Nutrient deprivation results in increasing intracellular concentrations of cyclic diguanosine monophosphate (c-di-GMP), which binds to the PdtaS sensor and promotes its autophosphorylation, leading to the activation of the signaling cascade. The phosphate group is then transferred to PdtaR. Functionally, in addition, the PdtaR/PdtaS two-component system controls copper and nitric oxide (NO) resistance downstream of the intramembrane protease Rip1. This coupled Rip1/PdtaS/PdtaR circuit controls NO resistance and acute lung infection in mice by relieving PdtaR/PdtaS-mediated repression of isonitrile chalkophore biosynthesis. Two signals are required to fully inactivate the PdtaR/PdtaS system and mediate NO resistance: a cytoplasmic inhibitory signal through the PdtaS kinase mediated by direct sensing of NO and the production of PPE1-5', an NO-induced small RNA, to sequester PdtaR. The chain is Sensor histidine kinase PdtaS (pdtaS) from Mycobacterium tuberculosis (strain CDC 1551 / Oshkosh).